A 101-amino-acid polypeptide reads, in one-letter code: Secreted enzymes activator (101 aa).

Basic residues predominate over residues 1–10 (MSRRRRRASA). Disordered regions lie at residues 1 to 26 (MSRR…PYGS) and 45 to 101 (TRLA…NGRG). Low complexity predominate over residues 45 to 60 (TRLAASSRASRAAVGS). Residues 55-74 (RAAVGSFDGAKNRPASSRRQ) constitute a DNA-binding region (H-T-H motif).

Its function is as follows. Increases the production of several extracellular enzymes, like alkaline phosphatase, amylase, protease or lipase. When present in high concentrations, delays the production of pigments and sporulation. The sequence is that of Secreted enzymes activator (saf) from Streptomyces griseus.